We begin with the raw amino-acid sequence, 1342 residues long: DNA-directed RNA polymerase subunit beta (1342 aa).

N6-acetyllysine occurs at positions 1022 and 1200.

It belongs to the RNA polymerase beta chain family. The RNAP catalytic core consists of 2 alpha, 1 beta, 1 beta' and 1 omega subunit. When a sigma factor is associated with the core the holoenzyme is formed, which can initiate transcription.

The catalysed reaction is RNA(n) + a ribonucleoside 5'-triphosphate = RNA(n+1) + diphosphate. DNA-dependent RNA polymerase catalyzes the transcription of DNA into RNA using the four ribonucleoside triphosphates as substrates. This Shigella dysenteriae serotype 1 (strain Sd197) protein is DNA-directed RNA polymerase subunit beta.